A 351-amino-acid polypeptide reads, in one-letter code: Inactive RHOMBOID-like protein 8 (351 aa).

7 helical membrane passes run 48–68 (TWLVSVFVLLQIVLFAVTMGV), 130–150 (WLHSGLFHLFINLGSLIFVGI), 160–180 (RIAVIYFLSGIMGSLFAVLFV), 183–203 (IPSISSGAAFFGLIGAMLSAL), 216–236 (ALAIIFTIFTVNFLIGFLPFI), 239–259 (FANIGGFISGFLLGFVLLFKP), and 294–314 (IICLLVFCGILAGVLLAACWG).

Belongs to the peptidase S54 family. Expressed in pollen mother cell.

It is found in the golgi apparatus membrane. Probable inactive rhomboid-type serine protease. In terms of biological role, probably essential for the meiosis stage-specific callose accumulation and pollen exine formation. The polypeptide is Inactive RHOMBOID-like protein 8 (Arabidopsis thaliana (Mouse-ear cress)).